Here is a 341-residue protein sequence, read N- to C-terminus: Phosphate acyltransferase (341 aa).

This sequence belongs to the PlsX family. As to quaternary structure, homodimer. Probably interacts with PlsY.

It is found in the cytoplasm. The enzyme catalyses a fatty acyl-[ACP] + phosphate = an acyl phosphate + holo-[ACP]. The protein operates within lipid metabolism; phospholipid metabolism. Catalyzes the reversible formation of acyl-phosphate (acyl-PO(4)) from acyl-[acyl-carrier-protein] (acyl-ACP). This enzyme utilizes acyl-ACP as fatty acyl donor, but not acyl-CoA. The chain is Phosphate acyltransferase from Vibrio atlanticus (strain LGP32) (Vibrio splendidus (strain Mel32)).